The chain runs to 574 residues: Optineurin (574 aa).

Residues 1–33 (MSHQPLSCLTEKGDSPTETTGNGPPTLAHPNLD) are disordered. A coiled-coil region spans residues 38 to 170 (HELLQQMREL…VSELQLKLNS (133 aa)). The interaction with Rab8 stretch occupies residues 58–209 (MKLNNQAMKG…GPIRTDSIDT (152 aa)). Residues 176-181 (DSFVEI) carry the LIR motif. Residue S177 is modified to Phosphoserine; by TBK1. At S198 the chain carries Phosphoserine. Residues 233–496 (CLREGNQKVE…ALQLAVLLKD (264 aa)) adopt a coiled-coil conformation. Over residues 262 to 286 (AKDRSETETQTEEHKEQEKEEEKSP) the composition is skewed to basic and acidic residues. The tract at residues 262–292 (AKDRSETETQTEEHKEQEKEEEKSPETVGSE) is disordered. S336 is modified (phosphoserine). Residues 405–574 (KRRESEKVDK…LLIHVTDCII (170 aa)) form an interaction with HD region. The interaction with MYO6 stretch occupies residues 406-515 (RRESEKVDKV…RQSLMEMQSR (110 aa)). The UBAN signature appears at 468–473 (DFHAER). S521 is modified (phosphoserine). Residues 544-574 (QQNIPIHSCPKCGEVLPDIDTLLIHVTDCII) form a CCHC NOA-type zinc finger. Residues C552, C555, H568, and C572 each coordinate Zn(2+).

Self-associates. Interacts with HD. Interacts with GTF3A. Interacts with MYO6. Interacts (via UBAN) with ubiquitinated TFRC. Interacts with GTP-bound Rab8 (RAB8A and/or RAB8B). Interacts with TBC1D17. Interacts with TBK1. Interacts with TRAF3. Binds to linear ubiquitin chains. Interacts with LC3 family members MAP1LC3A, MAP1LC3B, GABARAP, GABARAPL1 and GABARAPL2; OPTN phosphorylation increases the association (at least with MAP1LC3B). Interacts with RAB12; the interaction may be indirect. Interacts with TBK1; this interaction leads to the Golgi localization of TBK1 and its subsequent activation. Interacts with palmitoyltransferase ZDHHC17/HIP14; the interaction does not lead to palmitoylation of OPTN. Interacts with CYLD. Interacts with TOM1; the interaction is indirect and is mediated by MYO6, which acts as a bridge between TOM1 and OPTN. Interacts with USP12; the interaction is independent of USP12 deubiquitinase activity and may be involved in regulation of autophagic flux. Post-translationally, phosphorylated by TBK1, leading to restrict bacterial proliferation in case of infection. As to expression, present in aqueous humor of the eye (at protein level). Expressed in trabecular meshwork and astrocytes.

It localises to the cytoplasm. Its subcellular location is the perinuclear region. It is found in the golgi apparatus. The protein resides in the trans-Golgi network. The protein localises to the cytoplasmic vesicle. It localises to the autophagosome. Its subcellular location is the recycling endosome. Its function is as follows. Plays an important role in the maintenance of the Golgi complex, in membrane trafficking, in exocytosis, through its interaction with myosin VI and Rab8. Links myosin VI to the Golgi complex and plays an important role in Golgi ribbon formation. Negatively regulates the induction of IFNB in response to RNA virus infection. Plays a neuroprotective role in the eye and optic nerve. Probably part of the TNF-alpha signaling pathway that can shift the equilibrium toward induction of cell death. May act by regulating membrane trafficking and cellular morphogenesis via a complex that contains Rab8 and huntingtin (HD). Mediates the interaction of Rab8 with the probable GTPase-activating protein TBC1D17 during Rab8-mediated endocytic trafficking, such as that of transferrin receptor (TFRC/TfR); regulates Rab8 recruitment to tubules emanating from the endocytic recycling compartment. Autophagy receptor that interacts directly with both the cargo to become degraded and an autophagy modifier of the MAP1 LC3 family; targets ubiquitin-coated bacteria (xenophagy) and appears to function in the same pathway as SQSTM1 and CALCOCO2/NDP52. In Sus scrofa (Pig), this protein is Optineurin (OPTN).